A 617-amino-acid polypeptide reads, in one-letter code: V-type proton ATPase catalytic subunit A (617 aa).

250-257 (GAFGCGKT) lines the ATP pocket.

Belongs to the ATPase alpha/beta chains family. As to quaternary structure, V-ATPase is a heteromultimeric enzyme made up of two complexes: the ATP-hydrolytic V1 complex and the proton translocation V0 complex. The V1 complex consists of three catalytic AB heterodimers that form a heterohexamer, three peripheral stalks each consisting of EG heterodimers, one central rotor including subunits D and F, and the regulatory subunits C and H. The proton translocation complex V0 consists of the proton transport subunit a, a ring of proteolipid subunits c9c'', rotary subunit d, subunits e and f, and the accessory subunits VhaAC45 and ATP6AP2.

The enzyme catalyses ATP + H2O + 4 H(+)(in) = ADP + phosphate + 5 H(+)(out). Its activity is regulated as follows. ATP hydrolysis occurs at the interface between the nucleotide-binding domains of subunits A and B. ATP hydrolysis triggers a conformational change in the subunits D and F, which induces a shift of subunit d. The c-ring is subsequently rotated and results in a continuous proton translocation across the membrane. In terms of biological role, catalytic subunit of the V1 complex of vacuolar(H+)-ATPase (V-ATPase), a multisubunit enzyme composed of a peripheral complex (V1) that hydrolyzes ATP and a membrane integral complex (V0) that translocates protons. V-ATPase is responsible for acidifying and maintaining the pH of intracellular compartments and in some cell types, is targeted to the plasma membrane, where it is responsible for acidifying the extracellular environment. The polypeptide is V-type proton ATPase catalytic subunit A (VHAA) (Manduca sexta (Tobacco hawkmoth)).